We begin with the raw amino-acid sequence, 325 residues long: uncharacterized protein (325 aa).

2 stretches are compositionally biased toward polar residues: residues 1–21 (MSYQQRANDSMNSAKQYSSSA) and 29–57 (EPFSSSGAPQNRNFDTSYTSEIPSNSSRA). The interval 1–325 (MSYQQRANDS…LKTGHHSERY (325 aa)) is disordered. Positions 86 to 109 (ESRKKEQSDVRGGDTSYSRRHDDS) are enriched in basic and acidic residues. Composition is skewed to polar residues over residues 114 to 167 (NKYS…TTQG) and 174 to 193 (YSQSYPTDTYGSRQKATPSD). Composition is skewed to low complexity over residues 200-210 (YDYSSSGSHTH) and 252-278 (ATDTTAEANRRAATGTRNARTTAQRNA). Basic and acidic residues predominate over residues 282–325 (EDEHVSMGDKMKGNMEKMAGKLTRDPELVQKGEDLKTGHHSERY).

This is an uncharacterized protein from Schizosaccharomyces pombe (strain 972 / ATCC 24843) (Fission yeast).